Reading from the N-terminus, the 1568-residue chain is Kielin/chordin-like protein (1568 aa).

Residues 1 to 23 (MAGVGAAALSLLLHLGALALAAG) form the signal peptide. Residues 27–49 (GAVPREPPGQQTTAHSSVLAGNS) are disordered. The span at 35–49 (GQQTTAHSSVLAGNS) shows a compositional bias: polar residues. The stretch at 60–87 (LGRLEAAVMELREQNKDLQTRVRQLESC) forms a coiled coil. 16 VWFC domains span residues 136 to 193 (RGCS…PICR), 194 to 253 (PGCD…PTCQ), 253 to 312 (QGCT…PVCD), 312 to 370 (DGCF…PVCD), 426 to 485 (PACE…PSCD), 485 to 544 (DSCT…PRCP), 544 to 602 (PDCI…NDCS), 602 to 661 (SGCA…PQCP), 667 to 725 (AGCP…PSCD), 725 to 782 (DGCL…PDCD), 782 to 841 (DGCE…PTCQ), 900 to 959 (HSCL…PRCR), 959 to 1017 (RGCL…PQCS), 1017 to 1085 (SDCE…PTCA), 1082 to 1145 (PTCA…PVCR), and 1149 to 1209 (QSCV…PRCL). N-linked (GlcNAc...) asparagine glycosylation is present at asparagine 340. An N-linked (GlcNAc...) asparagine glycan is attached at asparagine 499. A glycan (N-linked (GlcNAc...) asparagine) is linked at asparagine 1090. The VWFD domain occupies 1213 to 1389 (ASCMAFGDPH…EGLWPGRPCS (177 aa)). 2 disulfide bridges follow: cysteine 1215/cysteine 1347 and cysteine 1237/cysteine 1388. In terms of domain architecture, TIL spans 1483–1543 (CPLERGFVFD…EAHCIPPEAC (61 aa)).

As to quaternary structure, interacts with BMP7 and, by doing so, enhances binding to the type I receptors that contains cytoplasmic serine/threonine protein kinase domains. Also able to interact with activin-A and TGFB1.

The protein resides in the secreted. In terms of biological role, enhances bone morphogenetic protein (BMP) signaling in a paracrine manner. In contrast, it inhibits both the activin-A and TGFB1-mediated signaling pathways. In Homo sapiens (Human), this protein is Kielin/chordin-like protein.